Reading from the N-terminus, the 178-residue chain is 2-C-methyl-D-erythritol 2,4-cyclodiphosphate synthase (178 aa).

Positions 24, 26, and 61 each coordinate a divalent metal cation. 24–26 (DSH) contacts 4-CDP-2-C-methyl-D-erythritol 2-phosphate. A 4-CDP-2-C-methyl-D-erythritol 2-phosphate-binding site is contributed by 150–153 (TSGE).

It belongs to the IspF family. Homotrimer. Requires a divalent metal cation as cofactor.

It catalyses the reaction 4-CDP-2-C-methyl-D-erythritol 2-phosphate = 2-C-methyl-D-erythritol 2,4-cyclic diphosphate + CMP. It participates in isoprenoid biosynthesis; isopentenyl diphosphate biosynthesis via DXP pathway; isopentenyl diphosphate from 1-deoxy-D-xylulose 5-phosphate: step 4/6. In terms of biological role, involved in the biosynthesis of isopentenyl diphosphate (IPP) and dimethylallyl diphosphate (DMAPP), two major building blocks of isoprenoid compounds. Catalyzes the conversion of 4-diphosphocytidyl-2-C-methyl-D-erythritol 2-phosphate (CDP-ME2P) to 2-C-methyl-D-erythritol 2,4-cyclodiphosphate (ME-CPP) with a corresponding release of cytidine 5-monophosphate (CMP). In Chlamydia trachomatis serovar L2 (strain ATCC VR-902B / DSM 19102 / 434/Bu), this protein is 2-C-methyl-D-erythritol 2,4-cyclodiphosphate synthase.